The sequence spans 367 residues: DNA-directed RNA polymerase II subunit GRINL1A (367 aa).

Residues 15-40 (DLERRSLAELREMLKRQERLLRNEKF) adopt a coiled-coil conformation. The tract at residues 29–68 (KRQERLLRNEKFICKLPDKGKKIFDSFAKLKAAIAECEEV) is important for transcription repressor activity. Polar residues-rich tracts occupy residues 117–131 (SVDN…QNQG), 176–185 (RVSSQAEDTS), and 205–225 (GEQQ…SGTQ). 3 disordered regions span residues 117-185 (SVDN…EDTS), 203-225 (DQGE…SGTQ), and 254-281 (PFRQ…RRDK). The interaction with Pol II stretch occupies residues 226 to 297 (KKPHYMEVLE…TAARLLPLHH (72 aa)). Ser269 is subject to Phosphoserine. The interval 298 to 313 (MPTQLLSIEESLALQK) is important for transcription repressor activity. Positions 300-329 (TQLLSIEESLALQKQRKQKYEEMQAKLAAQ) form a coiled coil. An interaction with Pol II region spans residues 314–339 (QRKQKYEEMQAKLAAQKLAERLNIKM). Residues 335–367 (LNIKMRSYNPEGESSGRYREVRDEDDDWSSDEF) are disordered. The segment covering 357–367 (DEDDDWSSDEF) has biased composition (acidic residues).

Belongs to the GRINL1 family. In terms of assembly, component of the Pol II(G) complex, which contains the RNA polymerase II (Pol II) core complex subunits and POLR2M isoform 1. Pol II(G) appears to be an abundant form of Pol II. In terms of processing, dephosphorylated at Ser-269 by the PNUTS-PP1 complex, promoting RNA polymerase II transcription pause-release.

It localises to the nucleus. Its function is as follows. Appears to be a stable component of the Pol II(G) complex form of RNA polymerase II (Pol II). Pol II synthesizes mRNA precursors and many functional non-coding RNAs and is the central component of the basal RNA polymerase II transcription machinery. May play a role in the Mediator complex-dependent regulation of transcription activation. Acts as a negative regulator of transcriptional activation; this repression is relieved by the Mediator complex, which restores Pol II(G) activator-dependent transcription to a level equivalent to that of Pol II. The protein is DNA-directed RNA polymerase II subunit GRINL1A (POLR2M) of Pongo abelii (Sumatran orangutan).